The primary structure comprises 281 residues: Orotidine 5'-phosphate decarboxylase (281 aa).

Lys-94 serves as the catalytic Proton donor.

It belongs to the OMP decarboxylase family. Type 2 subfamily.

It carries out the reaction orotidine 5'-phosphate + H(+) = UMP + CO2. Its pathway is pyrimidine metabolism; UMP biosynthesis via de novo pathway; UMP from orotate: step 2/2. In Thermomicrobium roseum (strain ATCC 27502 / DSM 5159 / P-2), this protein is Orotidine 5'-phosphate decarboxylase.